A 1067-amino-acid chain; its full sequence is Kinesin-like protein KIF11 (1067 aa).

Positions Asn-18–Ile-359 constitute a Kinesin motor domain. Position 105 to 112 (Gly-105 to Thr-112) interacts with ATP. Positions Val-365–Phe-480 form a coiled coil. Thr-937 carries the phosphothreonine; by CDK1 modification. Ser-1046 carries the phosphoserine; by NEK6 modification. The interval Ile-1048 to Asn-1067 is disordered.

It belongs to the TRAFAC class myosin-kinesin ATPase superfamily. Kinesin family. BimC subfamily. In terms of assembly, heterotetramer of two heavy and two light chains. Interacts with aurka. In terms of processing, phosphorylation of Thr-937 during mitosis controls the association of this protein with the spindle apparatus. Post-translationally, a subset of this protein primarily localized at the spindle pole is phosphorylated by NEK6 during mitosis. Phosphorylated on a serine residue by aurka.

It localises to the cytoplasm. Its subcellular location is the cytoskeleton. The protein localises to the spindle pole. Plus end-directed motor protein required for establishing a bipolar spindle. Associates with both interphase and mitotic spindle microtubules. May be involved in nuclear divisions taking place during the development of unfertilized eggs. Required in non-mitotic cells for transport of secretory proteins from the Golgi complex to the cell surface. In Xenopus tropicalis (Western clawed frog), this protein is Kinesin-like protein KIF11.